Here is a 111-residue protein sequence, read N- to C-terminus: Probable 4-amino-4-deoxy-L-arabinose-phosphoundecaprenol flippase subunit ArnE (111 aa).

Topologically, residues Met-1–His-35 are cytoplasmic. The chain crosses the membrane as a helical span at residues Ile-36–Leu-56. The region spanning Leu-40–Ser-109 is the EamA domain. Residues Val-57–Asn-60 are Periplasmic-facing. Residues Val-61–Ala-81 form a helical membrane-spanning segment. The Cytoplasmic portion of the chain corresponds to Val-82–Glu-87. Residues Pro-88–Gly-108 traverse the membrane as a helical segment. At Ser-109–Val-111 the chain is on the periplasmic side.

This sequence belongs to the ArnE family. As to quaternary structure, heterodimer of ArnE and ArnF.

Its subcellular location is the cell inner membrane. The protein operates within bacterial outer membrane biogenesis; lipopolysaccharide biosynthesis. Translocates 4-amino-4-deoxy-L-arabinose-phosphoundecaprenol (alpha-L-Ara4N-phosphoundecaprenol) from the cytoplasmic to the periplasmic side of the inner membrane. The chain is Probable 4-amino-4-deoxy-L-arabinose-phosphoundecaprenol flippase subunit ArnE from Escherichia coli O81 (strain ED1a).